The primary structure comprises 289 residues: ATP synthase gamma chain (289 aa).

Belongs to the ATPase gamma chain family. F-type ATPases have 2 components, CF(1) - the catalytic core - and CF(0) - the membrane proton channel. CF(1) has five subunits: alpha(3), beta(3), gamma(1), delta(1), epsilon(1). CF(0) has three main subunits: a, b and c.

The protein localises to the cell inner membrane. Its function is as follows. Produces ATP from ADP in the presence of a proton gradient across the membrane. The gamma chain is believed to be important in regulating ATPase activity and the flow of protons through the CF(0) complex. In Actinobacillus succinogenes (strain ATCC 55618 / DSM 22257 / CCUG 43843 / 130Z), this protein is ATP synthase gamma chain.